Reading from the N-terminus, the 689-residue chain is Sodium-dependent phosphate transport protein 2B (689 aa).

The disordered stretch occupies residues 1-41; sequence MAPWPELGDAQPNPDKYLEGAAGQQPTAPDKSKETNKNNTE. The Cytoplasmic portion of the chain corresponds to 1-100; sequence MAPWPELGDA…LCVFQGIGRL (100 aa). Residues 101-121 form a helical membrane-spanning segment; that stretch reads ILLLGFLYFFVCSLDILSSAF. At 122-135 the chain is on the extracellular side; that stretch reads QLVGGKMAGQFFSN. A helical transmembrane segment spans residues 136 to 156; that stretch reads SSIMSNPLLGLVIGVLVTVLV. Residues 157–212 lie on the Cytoplasmic side of the membrane; the sequence is QSSSTSTSIVVSMVSSSLLTVRAAIPIIMGANIGTSITNTIVALMQVGDRSEFRRA. The helical transmembrane segment at 213 to 233 threads the bilayer; the sequence is FAGATVHDFFNWLSVLVLLPV. The Extracellular portion of the chain corresponds to 234 to 362; it reads EVATHYLEII…FVNFHLPDLA (129 aa). N-linked (GlcNAc...) asparagine glycosylation is found at N294, N307, and N320. C302 and C349 form a disulfide bridge. The chain crosses the membrane as a helical span at residues 363-383; sequence VGTILLILSLLVLCGCLIMIV. Residues 384–407 are Cytoplasmic-facing; it reads KILGSVLKGQVATVIKKTINTDFP. The helical transmembrane segment at 408 to 428 threads the bilayer; that stretch reads FPFAWLTGYLAILVGAGMTFI. The Extracellular portion of the chain corresponds to 429–485; sequence VQSSSVFTSALTPLIGIGVITIERAYPLTLGSNIGTTTTAILAALASPGNALRSSLQ. The helical transmembrane segment at 486-506 threads the bilayer; sequence IALCHFFFNISGILLWYPIPF. At 507–525 the chain is on the cytoplasmic side; the sequence is TRLPIRMAKGLGNISAKYR. The helical transmembrane segment at 526–546 threads the bilayer; sequence WFAVFYLIIFFFLIPLTVFGL. The Extracellular portion of the chain corresponds to 547–552; the sequence is SLAGWR. Residues 553 to 573 form a helical membrane-spanning segment; sequence VLVGVGVPVVFIIILVLCLRL. Residues 574–687 lie on the Cytoplasmic side of the membrane; that stretch reads LQSRCPRVLP…PASDSKTECT (114 aa).

This sequence belongs to the SLC34A transporter family.

It is found in the apical cell membrane. The enzyme catalyses 3 Na(+)(out) + phosphate(out) = 3 Na(+)(in) + phosphate(in). Its function is as follows. Involved in actively transporting phosphate into cells via Na(+) cotransport. The chain is Sodium-dependent phosphate transport protein 2B (SLC34A2) from Pongo abelii (Sumatran orangutan).